The following is a 600-amino-acid chain: UvrABC system protein C (600 aa).

One can recognise a GIY-YIG domain in the interval 16–94 (EKPGCYQYFD…IKEYQPRYNV (79 aa)). A UVR domain is found at 208 to 243 (HRLVRMYRDRMQAYSEELRFEEAQICKERIELLERY).

The protein belongs to the UvrC family. As to quaternary structure, interacts with UvrB in an incision complex.

The protein resides in the cytoplasm. The UvrABC repair system catalyzes the recognition and processing of DNA lesions. UvrC both incises the 5' and 3' sides of the lesion. The N-terminal half is responsible for the 3' incision and the C-terminal half is responsible for the 5' incision. In Porphyromonas gingivalis (strain ATCC 33277 / DSM 20709 / CIP 103683 / JCM 12257 / NCTC 11834 / 2561), this protein is UvrABC system protein C.